Reading from the N-terminus, the 215-residue chain is Large ribosomal subunit protein uL1 (215 aa).

It belongs to the universal ribosomal protein uL1 family. In terms of assembly, part of the 50S ribosomal subunit.

Its function is as follows. Binds directly to 23S rRNA. Probably involved in E site tRNA release. Functionally, protein L1 is also a translational repressor protein, it controls the translation of its operon by binding to its mRNA. The sequence is that of Large ribosomal subunit protein uL1 from Methanospirillum hungatei JF-1 (strain ATCC 27890 / DSM 864 / NBRC 100397 / JF-1).